Reading from the N-terminus, the 235-residue chain is Ribonuclease 3 (235 aa).

Positions 6–131 (IDQLEKLTGH…LIAVIYLDGG (126 aa)) constitute an RNase III domain. E44 contributes to the Mg(2+) binding site. D48 is an active-site residue. Mg(2+)-binding residues include D117 and E120. E120 is an active-site residue. The DRBM domain occupies 156-225 (DAKTQLQEWA…AEKILRREGI (70 aa)).

Belongs to the ribonuclease III family. In terms of assembly, homodimer. Requires Mg(2+) as cofactor.

It is found in the cytoplasm. The catalysed reaction is Endonucleolytic cleavage to 5'-phosphomonoester.. Functionally, digests double-stranded RNA. Involved in the processing of primary rRNA transcript to yield the immediate precursors to the large and small rRNAs (23S and 16S). Processes some mRNAs, and tRNAs when they are encoded in the rRNA operon. Processes pre-crRNA and tracrRNA of type II CRISPR loci if present in the organism. The chain is Ribonuclease 3 from Bartonella henselae (strain ATCC 49882 / DSM 28221 / CCUG 30454 / Houston 1) (Rochalimaea henselae).